A 377-amino-acid chain; its full sequence is 1-deoxy-D-xylulose 5-phosphate reductoisomerase (377 aa).

Positions 20, 21, 23, 46, and 115 each coordinate NADPH. Lys116 provides a ligand contact to 1-deoxy-D-xylulose 5-phosphate. Residue Glu117 participates in NADPH binding. Asp141 serves as a coordination point for Mn(2+). Ser142, Glu143, Ser166, and His189 together coordinate 1-deoxy-D-xylulose 5-phosphate. Residue Glu143 participates in Mn(2+) binding. Residue Gly195 coordinates NADPH. Residues Ser202, Asn207, Lys208, and Glu211 each coordinate 1-deoxy-D-xylulose 5-phosphate. Glu211 provides a ligand contact to Mn(2+).

Belongs to the DXR family. Requires Mg(2+) as cofactor. Mn(2+) serves as cofactor.

The enzyme catalyses 2-C-methyl-D-erythritol 4-phosphate + NADP(+) = 1-deoxy-D-xylulose 5-phosphate + NADPH + H(+). It functions in the pathway isoprenoid biosynthesis; isopentenyl diphosphate biosynthesis via DXP pathway; isopentenyl diphosphate from 1-deoxy-D-xylulose 5-phosphate: step 1/6. In terms of biological role, catalyzes the NADPH-dependent rearrangement and reduction of 1-deoxy-D-xylulose-5-phosphate (DXP) to 2-C-methyl-D-erythritol 4-phosphate (MEP). This Malacoplasma penetrans (strain HF-2) (Mycoplasma penetrans) protein is 1-deoxy-D-xylulose 5-phosphate reductoisomerase.